Here is a 180-residue protein sequence, read N- to C-terminus: tRNA (cytidine(56)-2'-O)-methyltransferase (180 aa).

Leucine 85 provides a ligand contact to S-adenosyl-L-methionine.

The protein belongs to the aTrm56 family. Homodimer.

Its subcellular location is the cytoplasm. The catalysed reaction is cytidine(56) in tRNA + S-adenosyl-L-methionine = 2'-O-methylcytidine(56) in tRNA + S-adenosyl-L-homocysteine + H(+). Its function is as follows. Specifically catalyzes the AdoMet-dependent 2'-O-ribose methylation of cytidine at position 56 in tRNAs. This Methanobrevibacter smithii (strain ATCC 35061 / DSM 861 / OCM 144 / PS) protein is tRNA (cytidine(56)-2'-O)-methyltransferase.